The chain runs to 717 residues: MIYQSPTIEVELLEDNIAHLCFKAQGSVNKFDRETIDSLNAALDSIKQDTSIKALMLSSAKDAFIVGADITEFLGLFAEEDAVLQSWLEQANVVFNKLEDLPFPTLSAINGFALGAGCETILATDFRIADTTARIGLPETKLGIIPGFGGTVRLPRVIGADNALEWITSGKDQRPDAALKVGAIDAVVAPEQLRPAALRMLKDAMAEKLDWQTRRAKKLAPLTLPKLEAMMSFATAKGMVFKIAGKHYPAPMAVISVIEQAAQCGRAEALQIEHQAFIKLAKTEVAQALIGIFLNDQLVKGKAKKAGKLAKKVNSAAVLGAGIMGGGIAYQSASKGTPIVMKDIAQPALDLGLGEAAKLLTAQVKRGRSTPAKMATVLNNITPALDYAPVKDTDIIVEAVVEHPKVKSMVLAEVEEHVSEDAIITSNTSTISINLLAKSLKKPERFCGMHFFNPVHKMPLVEVIRGENSSDETVASVVAYASKMGKTPIVVNDCPGFFVNRVLFPYFAGFSGLLADGADFAAIDKVMEKQFGWPMGPAYLLDVVGLDTGHHAQAVMAEGFPDRMGKSGKDAIDVMFEAERFGQKNNKGFYQYSVDHRGKPKKDLDPTSYELLQAEFGEQKAFESDEIIARTMIPMIIETVRCLEEGIIASPAEADMGLVYGLGFPPFRGGVFRYLDTIGVANFVALADKYAHLGGLYQVTDTMRELAANNGSYYQQA.

Positions 1-189 (MIYQSPTIEV…KVGAIDAVVA (189 aa)) are enoyl-CoA hydratase/isomerase. Asp296 provides a ligand contact to substrate. Positions 311–717 (KKVNSAAVLG…ANNGSYYQQA (407 aa)) are 3-hydroxyacyl-CoA dehydrogenase. NAD(+)-binding positions include Met324, Asp343, 400–402 (VVE), Lys407, and Ser429. The active-site For 3-hydroxyacyl-CoA dehydrogenase activity is His450. Asn453 provides a ligand contact to NAD(+). Substrate contacts are provided by Asn500 and Tyr660.

This sequence in the N-terminal section; belongs to the enoyl-CoA hydratase/isomerase family. In the C-terminal section; belongs to the 3-hydroxyacyl-CoA dehydrogenase family. Heterotetramer of two alpha chains (FadB) and two beta chains (FadA).

The enzyme catalyses a (3S)-3-hydroxyacyl-CoA + NAD(+) = a 3-oxoacyl-CoA + NADH + H(+). The catalysed reaction is a (3S)-3-hydroxyacyl-CoA = a (2E)-enoyl-CoA + H2O. It carries out the reaction a 4-saturated-(3S)-3-hydroxyacyl-CoA = a (3E)-enoyl-CoA + H2O. It catalyses the reaction (3S)-3-hydroxybutanoyl-CoA = (3R)-3-hydroxybutanoyl-CoA. The enzyme catalyses a (3Z)-enoyl-CoA = a 4-saturated (2E)-enoyl-CoA. The catalysed reaction is a (3E)-enoyl-CoA = a 4-saturated (2E)-enoyl-CoA. It participates in lipid metabolism; fatty acid beta-oxidation. Involved in the aerobic and anaerobic degradation of long-chain fatty acids via beta-oxidation cycle. Catalyzes the formation of 3-oxoacyl-CoA from enoyl-CoA via L-3-hydroxyacyl-CoA. It can also use D-3-hydroxyacyl-CoA and cis-3-enoyl-CoA as substrate. This Shewanella halifaxensis (strain HAW-EB4) protein is Fatty acid oxidation complex subunit alpha.